Consider the following 574-residue polypeptide: Glycine--tRNA ligase (574 aa).

Positions 96 and 162 each coordinate substrate. ATP-binding positions include 194 to 196 (RNE), 204 to 209 (IRLREF), 327 to 328 (EC), and 450 to 453 (GIDR). 209 to 213 (FTQAE) serves as a coordination point for substrate. Residue 446-450 (EPSYG) participates in substrate binding.

The protein belongs to the class-II aminoacyl-tRNA synthetase family.

The protein localises to the cytoplasm. The catalysed reaction is tRNA(Gly) + glycine + ATP = glycyl-tRNA(Gly) + AMP + diphosphate. Functionally, catalyzes the attachment of glycine to tRNA(Gly). This chain is Glycine--tRNA ligase, found in Methanococcus maripaludis (strain DSM 14266 / JCM 13030 / NBRC 101832 / S2 / LL).